The chain runs to 190 residues: Potassium-transporting ATPase KdpC subunit (190 aa).

Residues 10–30 form a helical membrane-spanning segment; that stretch reads TFLFLLLITGGVYPLLTTALG.

This sequence belongs to the KdpC family. As to quaternary structure, the system is composed of three essential subunits: KdpA, KdpB and KdpC.

It localises to the cell inner membrane. Part of the high-affinity ATP-driven potassium transport (or Kdp) system, which catalyzes the hydrolysis of ATP coupled with the electrogenic transport of potassium into the cytoplasm. This subunit acts as a catalytic chaperone that increases the ATP-binding affinity of the ATP-hydrolyzing subunit KdpB by the formation of a transient KdpB/KdpC/ATP ternary complex. In Escherichia coli O45:K1 (strain S88 / ExPEC), this protein is Potassium-transporting ATPase KdpC subunit.